We begin with the raw amino-acid sequence, 161 residues long: MQGKAIKYGDNIDTDVIIPARFLNTSDPKELAEHCMEDLDREFKNKVKEGDILVVGENFGCGSSREHAPLAIKASGISCIIAKSFARIFYRNAINIGLPILESREAVDGIEEGDIVSVDVDNGIIRNVTKGTEFKAQPFPEFIKEIIKYGGLINYVREKVR.

Belongs to the LeuD family. LeuD type 2 subfamily. In terms of assembly, heterodimer of LeuC and LeuD.

It carries out the reaction (2R,3S)-3-isopropylmalate = (2S)-2-isopropylmalate. It functions in the pathway amino-acid biosynthesis; L-leucine biosynthesis; L-leucine from 3-methyl-2-oxobutanoate: step 2/4. Catalyzes the isomerization between 2-isopropylmalate and 3-isopropylmalate, via the formation of 2-isopropylmaleate. The sequence is that of 3-isopropylmalate dehydratase small subunit (leuD) from Caldanaerobacter subterraneus subsp. tengcongensis (strain DSM 15242 / JCM 11007 / NBRC 100824 / MB4) (Thermoanaerobacter tengcongensis).